Consider the following 137-residue polypeptide: Proofreading thioesterase EntH (137 aa).

The Nucleophile or proton acceptor role is filled by Glu-63.

Belongs to the thioesterase PaaI family. In terms of assembly, homotetramer. Dimer of dimers. Interacts specifically with the aryl carrier protein (ArCP) domain of EntB.

It localises to the cytoplasm. Its pathway is siderophore biosynthesis; enterobactin biosynthesis. Its function is as follows. Required for optimal enterobactin synthesis. Acts as a proofreading enzyme that prevents EntB misacylation by hydrolyzing the thioester bound existing between EntB and wrongly charged molecules. This Enterobacter lignolyticus (strain SCF1) protein is Proofreading thioesterase EntH.